The primary structure comprises 271 residues: Integral membrane protein 2C (271 aa).

The residue at position 41 (T41) is a Phosphothreonine. Residues 59–79 (VGGVCYLSMGMVVLLMGLVFA) form a helical; Signal-anchor for type II membrane protein membrane-spanning segment. In terms of domain architecture, BRICHOS spans 140–234 (FGGGDPADII…LCSGKDTYRL (95 aa)). C167 and C226 are joined by a disulfide. The N-linked (GlcNAc...) asparagine glycan is linked to N173.

This sequence belongs to the ITM2 family. Interacts with BACE1. Interacts with APP. Interacts with STMN2. In terms of processing, type I membrane-bound, as well as soluble, furin has a pre-eminent role in ITM2C proteolytic processing. PCSK7 and PCSK5 may also be involved although to a lesser extent. The soluble form of PCSK7 is incapable of processing ITM2C. Fails to undergo shedding by ADAM10 and intramembrane cleavage by SPPL2B.

Its subcellular location is the lysosome membrane. The protein resides in the cell membrane. Its function is as follows. Negative regulator of amyloid-beta peptide production. May inhibit the processing of APP by blocking its access to alpha- and beta-secretase. Binding to the beta-secretase-cleaved APP C-terminal fragment is negligible, suggesting that ITM2C is a poor gamma-secretase cleavage inhibitor. May play a role in TNF-induced cell death and neuronal differentiation. The sequence is that of Integral membrane protein 2C (ITM2C) from Bos taurus (Bovine).